Here is a 101-residue protein sequence, read N- to C-terminus: Phosphoprotein OPG062 (101 aa).

A disordered region spans residues 50–73 (KPSSPTCERRPSSPSRCERMNNPG). The span at 56 to 68 (CERRPSSPSRCER) shows a compositional bias: basic and acidic residues.

It belongs to the orthopoxvirus OPG062 family. Self-associates to form high molecular-weight forms. Interacts with protein OPG157. Interacts with host RICTOR and RPTOR; these interactions disrupt the mTORC1 and mTORC2 crosstalk.

It is found in the virion. In terms of biological role, plays an essential role in virion assembly and morphogenesis. Also plays a role in the inhibition of host immune response by dysregulating mTOR. Sequesters host RICTOR and RPTOR, thereby disrupting mTORC1 and mTORC2 crosstalk. In turn, blocks the host antiviral response in part through mTOR-dependent degradation of cGAS, the primary poxvirus sensor. The chain is Phosphoprotein OPG062 (OPG062) from Monkeypox virus.